The following is a 732-amino-acid chain: MLARRQRDPLQALRRRNQELKQQVDSLLSESQLKEALEPNKRQHIYQRCIQLKQAIDENKNALQKLSKADESAPVANYNQRKEEEHTLLDKLTQQLQGLAVTISRENITEVGAPTEEEEESESEDSEDSGGEEEDAEEEEEEKEENESHKWSTGEEYIAVGDFTAQQVGDLTFKKGEILLVIEKKPDGWWIAKDAKGNEGLVPRTYLEPYSEEEEGQESSEEGSEEDVEAVDETADGAEVKQRTDPHWSAVQKAISEAGIFCLVNHVSFCYLIVLMRNRMETVEDTNGSETGFRAWNVQSRGRIFLVSKPVLQINTVDVLTTMGAIPAGFRPSTLSQLLEEGNQFRANYFLQPELMPSQLAFRDLMWDATEGTIRSRPSRISLILTLWSCKMIPLPGMSIQVLSRHVRLCLFDGNKVLSNIHTVRATWQPKKPKTWTFSPQVTRILPCLLDGDCFIRSNSASPDLGILFELGISYIRNSTGERGELSCGWVFLKLFDASGVPIPAKTYELFLNGGTPYEKGIEVDPSISRRAHGSVFYQIMTMRRQPQLLVKLRSLNRRSRNVLSLLPETLIGNMCSIHLLIFYRQILGDVLLKDRMSLQSTDLISHPMLATFPMLLEQPDVMDALRSSWAGKESTLKRSEKRDKEFLKSTFLLVYHDCVLPLLHSTRLPPFRWAEEETETARWKVITDFLKQNQENQGALQALLSPDGVHEPFDLSEQTYDFLGEMRKNAV.

Residues 3–105 adopt a coiled-coil conformation; that stretch reads ARRQRDPLQA…LQGLAVTISR (103 aa). The residue at position 46 (tyrosine 46) is a Phosphotyrosine; by FAK2. Disordered regions lie at residues 103 to 153 and 205 to 244; these read ISRE…KWST and TYLE…KQRT. Acidic residues-rich tracts occupy residues 115-145 and 210-236; these read TEEE…EKEE and YSEE…ETAD. Phosphoserine; by CK2 is present on residues serine 121, serine 123, and serine 126. Residues 127–150 adopt a coiled-coil conformation; the sequence is EDSGGEEEDAEEEEEEKEENESHK. An SH3 domain is found at 152-212; it reads STGEEYIAVG…PRTYLEPYSE (61 aa). Phosphotyrosine; by FAK2 is present on tyrosine 349. Residue tyrosine 721 is modified to Phosphotyrosine; by SRC.

The protein belongs to the nephrocystin-1 family. In terms of assembly, interacts with BCAR1, PTK2B/PYK2 and tensin. Interacts with INVS and NPHP3. Interacts with PACS1; the interaction is dependent on NPHP1 phosphorylation by CK2. Interacts with KIF7. Interacts with AHI1 and TNK2. Interacts with NPHP4 in a complex containing NPHP1, NPHP4 and RPGRIP1L. Interacts with IQCB1; the interaction likely requires additional interactors. Interacts with ANKS3. Interacts with SPATA7. Interacts with FLNA. Post-translationally, phosphorylation by CK2 is required for the interaction with PACS1 and the targeting to the base region of cilia. In terms of tissue distribution, widespread expression, with highest levels in pituitary gland, spinal cord, thyroid gland, testis, skeletal muscle, lymph node and trachea. Weakly expressed in heart, kidney and pancreas. Expressed in nasal epithelial cells (at protein level). Expressed in the renal collecting duct (at protein level).

Its subcellular location is the cell junction. It is found in the adherens junction. The protein resides in the cell projection. It localises to the cilium. The protein localises to the cytoplasm. Its subcellular location is the cytoskeleton. It is found in the cilium axoneme. The protein resides in the tight junction. Functionally, together with BCAR1 it may play a role in the control of epithelial cell polarity. Involved in the organization of apical junctions in kidney cells together with NPHP4 and RPGRIP1L/NPHP8. Does not seem to be strictly required for ciliogenesis. Seems to help to recruit PTK2B/PYK2 to cell matrix adhesions, thereby initiating phosphorylation of PTK2B/PYK2 and PTK2B/PYK2-dependent signaling. May play a role in the regulation of intraflagellar transport (IFT) during cilia assembly. Required for normal retina development. In connecting photoreceptor cilia influences the movement of some IFT proteins such as IFT88 and WDR19. Involved in spermatogenesis. The chain is Nephrocystin-1 (NPHP1) from Homo sapiens (Human).